We begin with the raw amino-acid sequence, 110 residues long: Large ribosomal subunit protein uL24 (110 aa).

This sequence belongs to the universal ribosomal protein uL24 family. In terms of assembly, part of the 50S ribosomal subunit.

One of two assembly initiator proteins, it binds directly to the 5'-end of the 23S rRNA, where it nucleates assembly of the 50S subunit. Functionally, one of the proteins that surrounds the polypeptide exit tunnel on the outside of the subunit. The protein is Large ribosomal subunit protein uL24 of Roseiflexus castenholzii (strain DSM 13941 / HLO8).